The following is a 429-amino-acid chain: Enolase (429 aa).

Q163 lines the (2R)-2-phosphoglycerate pocket. E205 acts as the Proton donor in catalysis. 3 residues coordinate Mg(2+): D242, E285, and D312. (2R)-2-phosphoglycerate-binding residues include K337, R366, S367, and K388. K337 (proton acceptor) is an active-site residue.

The protein belongs to the enolase family. Mg(2+) serves as cofactor.

The protein resides in the cytoplasm. Its subcellular location is the secreted. It localises to the cell surface. It catalyses the reaction (2R)-2-phosphoglycerate = phosphoenolpyruvate + H2O. The protein operates within carbohydrate degradation; glycolysis; pyruvate from D-glyceraldehyde 3-phosphate: step 4/5. Catalyzes the reversible conversion of 2-phosphoglycerate (2-PG) into phosphoenolpyruvate (PEP). It is essential for the degradation of carbohydrates via glycolysis. The sequence is that of Enolase from Methylorubrum extorquens (strain PA1) (Methylobacterium extorquens).